The primary structure comprises 176 residues: MTNIRKSHPLLKIINNSFIDLPAPSNISSWWNFGSLLGICLALQILTGIFLAMHYTSDTATAFNSVTHICRDVNYGWVLRYLHANGASMFFICLYLHVGRGLYYGSYMYKETWNMGVILLFAVMATAFMGYVLPWGQMSFWGATVITNLLSAIPYIGTDLVEWIWGGFSVDKATLT.

The next 3 membrane-spanning stretches (helical) occupy residues 33 to 53, 77 to 98, and 113 to 133; these read FGSL…FLAM, WVLR…YLHV, and WNMG…GYVL. Heme b contacts are provided by His-83 and His-97.

This sequence belongs to the cytochrome b family. The cytochrome bc1 complex contains 11 subunits: 3 respiratory subunits (MT-CYB, CYC1 and UQCRFS1), 2 core proteins (UQCRC1 and UQCRC2) and 6 low-molecular weight proteins (UQCRH/QCR6, UQCRB/QCR7, UQCRQ/QCR8, UQCR10/QCR9, UQCR11/QCR10 and a cleavage product of UQCRFS1). This cytochrome bc1 complex then forms a dimer. Heme b serves as cofactor.

The protein resides in the mitochondrion inner membrane. Component of the ubiquinol-cytochrome c reductase complex (complex III or cytochrome b-c1 complex) that is part of the mitochondrial respiratory chain. The b-c1 complex mediates electron transfer from ubiquinol to cytochrome c. Contributes to the generation of a proton gradient across the mitochondrial membrane that is then used for ATP synthesis. This Lasionycteris noctivagans (Silver-haired bat) protein is Cytochrome b (MT-CYB).